Here is a 290-residue protein sequence, read N- to C-terminus: Large ribosomal subunit protein uL2m (290 aa).

Belongs to the universal ribosomal protein uL2 family. As to quaternary structure, probably part of the large ribosomal subunit.

The protein localises to the hydrogenosome. The protein is Large ribosomal subunit protein uL2m (rpl2) of Nyctotherus ovalis.